Here is a 281-residue protein sequence, read N- to C-terminus: Release factor glutamine methyltransferase (281 aa).

S-adenosyl-L-methionine contacts are provided by Glu-142 and Asn-184. 184 to 187 (NPPY) lines the substrate pocket. Residues 261 to 281 (AADHPDLNNRPRFATARKALP) form a disordered region.

The protein belongs to the protein N5-glutamine methyltransferase family. PrmC subfamily.

It catalyses the reaction L-glutaminyl-[peptide chain release factor] + S-adenosyl-L-methionine = N(5)-methyl-L-glutaminyl-[peptide chain release factor] + S-adenosyl-L-homocysteine + H(+). Functionally, methylates the class 1 translation termination release factors RF1/PrfA and RF2/PrfB on the glutamine residue of the universally conserved GGQ motif. This is Release factor glutamine methyltransferase from Streptomyces coelicolor (strain ATCC BAA-471 / A3(2) / M145).